Reading from the N-terminus, the 155-residue chain is Regulatory protein RecX (155 aa).

The protein belongs to the RecX family.

The protein localises to the cytoplasm. In terms of biological role, modulates RecA activity. The protein is Regulatory protein RecX of Pseudomonas fluorescens (strain ATCC BAA-477 / NRRL B-23932 / Pf-5).